The sequence spans 329 residues: Peroxidase 56 (329 aa).

An N-terminal signal peptide occupies residues 1 to 31; sequence MAALKMTISCFLFLQVIYCLLSSFAPTNVQG. Disulfide bonds link Cys41–Cys119, Cys74–Cys79, Cys125–Cys325, and Cys204–Cys236. The active-site Proton acceptor is the His72. Asp73, Val76, Gly78, Glu80, and Ser82 together coordinate Ca(2+). N-linked (GlcNAc...) asparagine glycosylation is present at Asn158. Pro167 serves as a coordination point for substrate. Asn172 carries an N-linked (GlcNAc...) asparagine glycan. Residue His197 coordinates heme b. Thr198 is a binding site for Ca(2+). A glycan (N-linked (GlcNAc...) asparagine) is linked at Asn213. 3 residues coordinate Ca(2+): Asp248, Ser251, and Asp256.

The protein belongs to the peroxidase family. Classical plant (class III) peroxidase subfamily. Heme b is required as a cofactor. The cofactor is Ca(2+).

It is found in the secreted. It carries out the reaction 2 a phenolic donor + H2O2 = 2 a phenolic radical donor + 2 H2O. Its function is as follows. Removal of H(2)O(2), oxidation of toxic reductants, biosynthesis and degradation of lignin, suberization, auxin catabolism, response to environmental stresses such as wounding, pathogen attack and oxidative stress. These functions might be dependent on each isozyme/isoform in each plant tissue. The chain is Peroxidase 56 (PER56) from Arabidopsis thaliana (Mouse-ear cress).